We begin with the raw amino-acid sequence, 918 residues long: DNA mismatch repair protein MutS (918 aa).

Glycine 662 to serine 669 provides a ligand contact to ATP.

Belongs to the DNA mismatch repair MutS family.

This protein is involved in the repair of mismatches in DNA. It is possible that it carries out the mismatch recognition step. This protein has a weak ATPase activity. The protein is DNA mismatch repair protein MutS of Sorangium cellulosum (strain So ce56) (Polyangium cellulosum (strain So ce56)).